Reading from the N-terminus, the 105-residue chain is Large ribosomal subunit protein eL42 (105 aa).

The tract at residues 23 to 52 (KVTQYKKGKESRLAQGRRRYDSKQKGFGGQ) is disordered. Over residues 29-46 (KGKESRLAQGRRRYDSKQ) the composition is skewed to basic and acidic residues.

This sequence belongs to the eukaryotic ribosomal protein eL42 family.

This is Large ribosomal subunit protein eL42 (rpl-44) from Brugia malayi (Filarial nematode worm).